The following is an 856-amino-acid chain: Rab effector MyRIP (856 aa).

Residues 4 to 124 (KLDLSGLTDD…TQSLEWFYNN (121 aa)) form the RabBD domain. Residues 63 to 105 (CCMRCCSPFTFLVNARRRCGECKFSVCKSCCSYQKHEKLWVCC) form an FYVE-type zinc finger. The myosin-binding stretch occupies residues 143 to 560 (KKHRLESGAC…AQVSDNVSET (418 aa)). Residues 193 to 209 (VALQVAEEAIEEAISKA) form a PKA-binding region. A negative regulation of PKA-binding region spans residues 232-248 (LAEELAGTILQRIIRKQ). The disordered stretch occupies residues 251-287 (KADLHAEEEEPECTRPQSSGVKARGEGTAAPPGRHKA). Ser299 is modified (phosphoserine). A compositionally biased stretch (polar residues) spans 302–311 (TEDTLKTSSA). 6 disordered regions span residues 302 to 323 (TEDT…DRAQ), 350 to 376 (QSPD…KPKS), 392 to 578 (YDEL…SAEE), 592 to 625 (SEKE…NNQG), 778 to 805 (RRDQ…APPV), and 826 to 845 (LLQG…TKDL). A Phosphoserine modification is found at Ser351. Residues 395–405 (LGSDSEEDFDY) show a composition bias toward acidic residues. Composition is skewed to low complexity over residues 427–437 (PAQAQSSGQGP) and 450–460 (SDSETSSTSSS). The actin-binding stretch occupies residues 495–856 (FNPQAAGGET…EPVLESAVMY (362 aa)). Composition is skewed to polar residues over residues 551-574 (AQVS…SSTD), 613-625 (QKGS…NNQG), 784-793 (RSQVQTIDTS), and 826-843 (LLQG…SNTK).

Binds MYO5A, MYO7A and F-actin. Binds RAB27A that has been activated by GTP-binding via its N-terminus. Interacts with PRKAR2A. Interacts with components of the exocyst complex, including EXOC3 and EXOC4.

Its subcellular location is the cytoplasm. The protein localises to the perinuclear region. The protein resides in the cytoplasmic vesicle. It is found in the secretory vesicle. It localises to the melanosome. Rab effector protein involved in melanosome transport. Serves as link between melanosome-bound RAB27A and the motor proteins MYO5A and MYO7A. May link RAB27A-containing vesicles to actin filaments. Functions as a protein kinase A-anchoring protein (AKAP). May act as a scaffolding protein that links PKA to components of the exocytosis machinery, thus facilitating exocytosis, including insulin release. The polypeptide is Rab effector MyRIP (Myrip) (Rattus norvegicus (Rat)).